The sequence spans 288 residues: Diaminopimelate epimerase (288 aa).

2 residues coordinate substrate: asparagine 14 and asparagine 67. The Proton donor role is filled by cysteine 76. Substrate is bound by residues glycine 77 to asparagine 78, asparagine 166, asparagine 199, and glutamate 217 to arginine 218. Cysteine 226 functions as the Proton acceptor in the catalytic mechanism. Glycine 227–threonine 228 lines the substrate pocket.

Belongs to the diaminopimelate epimerase family. As to quaternary structure, homodimer.

The protein resides in the cytoplasm. It catalyses the reaction (2S,6S)-2,6-diaminopimelate = meso-2,6-diaminopimelate. It participates in amino-acid biosynthesis; L-lysine biosynthesis via DAP pathway; DL-2,6-diaminopimelate from LL-2,6-diaminopimelate: step 1/1. Its function is as follows. Catalyzes the stereoinversion of LL-2,6-diaminopimelate (L,L-DAP) to meso-diaminopimelate (meso-DAP), a precursor of L-lysine and an essential component of the bacterial peptidoglycan. This chain is Diaminopimelate epimerase, found in Bacillus cereus (strain ATCC 14579 / DSM 31 / CCUG 7414 / JCM 2152 / NBRC 15305 / NCIMB 9373 / NCTC 2599 / NRRL B-3711).